We begin with the raw amino-acid sequence, 249 residues long: 2,3-bisphosphoglycerate-dependent phosphoglycerate mutase (249 aa).

Substrate-binding positions include 9–16 (RHGQSQWN), 22–23 (TG), Arg61, 88–91 (ERHY), Lys99, 115–116 (RR), and 184–185 (GN). His10 functions as the Tele-phosphohistidine intermediate in the catalytic mechanism. The Proton donor/acceptor role is filled by Glu88.

Belongs to the phosphoglycerate mutase family. BPG-dependent PGAM subfamily. As to quaternary structure, homodimer.

The enzyme catalyses (2R)-2-phosphoglycerate = (2R)-3-phosphoglycerate. It participates in carbohydrate degradation; glycolysis; pyruvate from D-glyceraldehyde 3-phosphate: step 3/5. Catalyzes the interconversion of 2-phosphoglycerate and 3-phosphoglycerate. In Xylella fastidiosa (strain 9a5c), this protein is 2,3-bisphosphoglycerate-dependent phosphoglycerate mutase.